Here is a 542-residue protein sequence, read N- to C-terminus: Chaperonin GroEL (542 aa).

ATP is bound by residues 29-32, 86-90, Gly413, 476-478, and Asp492; these read TLGP, DGTTT, and NAA.

It belongs to the chaperonin (HSP60) family. In terms of assembly, forms a cylinder of 14 subunits composed of two heptameric rings stacked back-to-back. Interacts with the co-chaperonin GroES.

The protein resides in the cytoplasm. It carries out the reaction ATP + H2O + a folded polypeptide = ADP + phosphate + an unfolded polypeptide.. Together with its co-chaperonin GroES, plays an essential role in assisting protein folding. The GroEL-GroES system forms a nano-cage that allows encapsulation of the non-native substrate proteins and provides a physical environment optimized to promote and accelerate protein folding. The protein is Chaperonin GroEL of Lactococcus lactis subsp. lactis (strain IL1403) (Streptococcus lactis).